The sequence spans 1433 residues: Bacillopeptidase F (1433 aa).

A signal peptide spans 1–30; sequence MRKKTKNRLISSVLSTVVISSLLFPGAAGA. Positions 31-194 are excised as a propeptide; it reads SSKVTSPSVK…NMKKAQKAIK (164 aa). Residues 68-177 enclose the Inhibitor I9 domain; it reads TFLIKFKDLA…KVLPNEKRQL (110 aa). A Peptidase S8 domain is found at 200–512; sequence EWNVDQIDAP…HGLVNAFDAV (313 aa). Active-site charge relay system residues include D227, H274, and S452. Positions 756-1433 are excised as a propeptide; sequence SAYKGQNIQV…NGKLNMNTEN (678 aa). A disordered region spans residues 800 to 830; sequence KLGVEKPSGKQKKKPVNPKKAKPSANTAVKH. Residues 808-821 are compositionally biased toward basic residues; that stretch reads GKQKKKPVNPKKAK.

This sequence belongs to the peptidase S8 family.

The protein resides in the secreted. The sequence is that of Bacillopeptidase F (bpr) from Bacillus subtilis (strain 168).